A 266-amino-acid polypeptide reads, in one-letter code: UPF0246 protein Pcryo_0542 (266 aa).

This sequence belongs to the UPF0246 family.

In Psychrobacter cryohalolentis (strain ATCC BAA-1226 / DSM 17306 / VKM B-2378 / K5), this protein is UPF0246 protein Pcryo_0542.